The sequence spans 85 residues: Protein BTH_I0359 (85 aa).

The protein is Protein BTH_I0359 of Burkholderia thailandensis (strain ATCC 700388 / DSM 13276 / CCUG 48851 / CIP 106301 / E264).